Consider the following 538-residue polypeptide: Nicotinate phosphoribosyltransferase (538 aa).

Residues Tyr-21 and Thr-210 each contribute to the nicotinate site. His-213 carries the phosphohistidine modification. Nicotinate is bound at residue Arg-318. Position 380 (Thr-380) interacts with 5-phospho-alpha-D-ribose 1-diphosphate.

This sequence belongs to the NAPRTase family. Homodimer. Requires Mg(2+) as cofactor. Mn(2+) serves as cofactor. Post-translationally, transiently phosphorylated on a His residue during the reaction cycle. Phosphorylation strongly increases the affinity for substrates and increases the rate of nicotinate D-ribonucleotide production. Dephosphorylation regenerates the low-affinity form of the enzyme, leading to product release.

Its subcellular location is the cytoplasm. It localises to the cytosol. The enzyme catalyses nicotinate + 5-phospho-alpha-D-ribose 1-diphosphate + ATP + H2O = nicotinate beta-D-ribonucleotide + ADP + phosphate + diphosphate. It participates in cofactor biosynthesis; NAD(+) biosynthesis; nicotinate D-ribonucleotide from nicotinate: step 1/1. Functionally, catalyzes the first step in the biosynthesis of NAD from nicotinic acid, the ATP-dependent synthesis of beta-nicotinate D-ribonucleotide from nicotinate and 5-phospho-D-ribose 1-phosphate. Helps prevent cellular oxidative stress via its role in NAD biosynthesis. This Bos taurus (Bovine) protein is Nicotinate phosphoribosyltransferase (NAPRT).